A 196-amino-acid polypeptide reads, in one-letter code: Pyridoxal 5'-phosphate synthase subunit PdxT (196 aa).

Residue 47–49 (GES) coordinates L-glutamine. C79 acts as the Nucleophile in catalysis. Residues R106 and 134–135 (IR) each bind L-glutamine. Residues H170 and E172 each act as charge relay system in the active site.

It belongs to the glutaminase PdxT/SNO family. As to quaternary structure, in the presence of PdxS, forms a dodecamer of heterodimers. Only shows activity in the heterodimer.

It catalyses the reaction aldehydo-D-ribose 5-phosphate + D-glyceraldehyde 3-phosphate + L-glutamine = pyridoxal 5'-phosphate + L-glutamate + phosphate + 3 H2O + H(+). The enzyme catalyses L-glutamine + H2O = L-glutamate + NH4(+). It functions in the pathway cofactor biosynthesis; pyridoxal 5'-phosphate biosynthesis. Its function is as follows. Catalyzes the hydrolysis of glutamine to glutamate and ammonia as part of the biosynthesis of pyridoxal 5'-phosphate. The resulting ammonia molecule is channeled to the active site of PdxS. The sequence is that of Pyridoxal 5'-phosphate synthase subunit PdxT from Bacillus cereus (strain Q1).